A 447-amino-acid polypeptide reads, in one-letter code: UPF0210 protein LEUM_1180 (447 aa).

Belongs to the UPF0210 family. Homodimer.

The sequence is that of UPF0210 protein LEUM_1180 from Leuconostoc mesenteroides subsp. mesenteroides (strain ATCC 8293 / DSM 20343 / BCRC 11652 / CCM 1803 / JCM 6124 / NCDO 523 / NBRC 100496 / NCIMB 8023 / NCTC 12954 / NRRL B-1118 / 37Y).